The chain runs to 494 residues: Peptidyl-prolyl cis-trans isomerase-like 4 (494 aa).

The region spanning 1–172 is the PPIase cyclophilin-type domain; that stretch reads MSVLLETSAG…VDIRIKHTVI (172 aa). The interval 176–196 is disordered; it reads PYPDPAGMREPSASPPPSKAQ. The stretch at 206–240 forms a coiled coil; sequence EELLDVEASEEAAAEAERRRREREAAAQALTLEMM. Positions 253 to 331 constitute an RRM domain; it reads NVLFVCKLNP…RRIHVDFSQS (79 aa). 2 stretches are compositionally biased toward basic and acidic residues: residues 391–418 and 425–494; these read DLKG…DRST and PRRD…YRRR. Residues 391-494 form a disordered region; that stretch reads DLKGRHDGDK…NRGRDDYRRR (104 aa).

Belongs to the cyclophilin-type PPIase family. PPIL4 subfamily.

Its subcellular location is the nucleus. It carries out the reaction [protein]-peptidylproline (omega=180) = [protein]-peptidylproline (omega=0). Its function is as follows. PPIases accelerate the folding of proteins. It catalyzes the cis-trans isomerization of proline imidic peptide bonds in oligopeptides. The polypeptide is Peptidyl-prolyl cis-trans isomerase-like 4 (cyp-6) (Neurospora crassa (strain ATCC 24698 / 74-OR23-1A / CBS 708.71 / DSM 1257 / FGSC 987)).